We begin with the raw amino-acid sequence, 265 residues long: 2-amino-3,7-dideoxy-D-threo-hept-6-ulosonate synthase (265 aa).

The Proton acceptor role is filled by aspartate 25. 1-deoxy-D-threo-hexo-2,5-diulose 6-phosphate contacts are provided by residues 25 to 29 (DHGIT) and 144 to 146 (YAR). Tyrosine 144 (proton donor) is an active-site residue. The active-site Schiff-base intermediate with substrate is lysine 174. 1-deoxy-D-threo-hexo-2,5-diulose 6-phosphate contacts are provided by residues 199-200 (GG) and 226-227 (GR).

This sequence belongs to the DeoC/FbaB aldolase family. ADHS subfamily. Homodecamer.

It carries out the reaction 1-deoxy-D-threo-hexo-2,5-diulose 6-phosphate + L-aspartate 4-semialdehyde = 2,3-dioxopropyl phosphate + 2-amino-2,3,7-trideoxy-D-lyxo-hept-6-ulosonate. Catalyzes a transaldol reaction between 6-deoxy-5-ketofructose 1-phosphate (DKFP) and L-aspartate semialdehyde (ASA) with an elimination of hydroxypyruvaldehyde phosphate to yield 2-amino-3,7-dideoxy-D-threo-hept-6-ulosonate (ADH). Plays a key role in an alternative pathway of the biosynthesis of 3-dehydroquinate (DHQ), which is involved in the canonical pathway for the biosynthesis of aromatic amino acids. The protein is 2-amino-3,7-dideoxy-D-threo-hept-6-ulosonate synthase of Halobacterium salinarum (strain ATCC 700922 / JCM 11081 / NRC-1) (Halobacterium halobium).